Consider the following 326-residue polypeptide: H-2 class I histocompatibility antigen, Q8 alpha chain (326 aa).

An N-terminal signal peptide occupies residues 1–21 (MALTMLLLLVAAALTLIETRA). The interval 22–111 (GPHSLRYFHT…AQRYYNQSKG (90 aa)) is alpha-1. Topologically, residues 22-305 (GPHSLRYFHT…EPPPSTVSNM (284 aa)) are extracellular. N107 is a glycosylation site (N-linked (GlcNAc...) asparagine). The tract at residues 112–203 (GSHTLQWMYG…QLRKETLLCT (92 aa)) is alpha-2. 2 disulfide bridges follow: C122-C185 and C224-C280. The interval 204–295 (DPPKAHVTHH…GLPEPLTLRW (92 aa)) is alpha-3. One can recognise an Ig-like C1-type domain in the interval 206–294 (PKAHVTHHPR…EGLPEPLTLR (89 aa)). N277 carries an N-linked (GlcNAc...) asparagine glycan. The segment at 296-305 (EPPPSTVSNM) is connecting peptide. The helical transmembrane segment at 306–326 (ANVAILVVLVAWPSLELWWIL) threads the bilayer.

It belongs to the MHC class I family. As to quaternary structure, heterodimer of an alpha chain and a beta chain (beta-2-microglobulin).

It is found in the membrane. In terms of biological role, involved in the presentation of foreign antigens to the immune system. The chain is H-2 class I histocompatibility antigen, Q8 alpha chain (H2-Q8) from Mus musculus (Mouse).